We begin with the raw amino-acid sequence, 709 residues long: Myotubularin-related protein 11 (709 aa).

The tract at residues 1–39 is disordered; the sequence is MWWGGRGQSFNIAPQKEEPEMGSVQENRMPEPRSRQPSS. The region spanning 196 to 639 is the Myotubularin phosphatase domain; that stretch reads METAEDWETE…PQIRLWRRCY (444 aa).

Belongs to the protein-tyrosine phosphatase family. Non-receptor class myotubularin subfamily. As to expression, expressed in bone marrow, spleen and thymus.

This is Myotubularin-related protein 11 (MTMR11) from Homo sapiens (Human).